A 347-amino-acid polypeptide reads, in one-letter code: Protein RecA (347 aa).

ATP is bound at residue 67-74 (GPESSGKT).

The protein belongs to the RecA family.

It localises to the cytoplasm. Can catalyze the hydrolysis of ATP in the presence of single-stranded DNA, the ATP-dependent uptake of single-stranded DNA by duplex DNA, and the ATP-dependent hybridization of homologous single-stranded DNAs. It interacts with LexA causing its activation and leading to its autocatalytic cleavage. The sequence is that of Protein RecA from Helicobacter pylori (strain G27).